The sequence spans 654 residues: DNA-directed RNA polymerase III subunit RPC3 (654 aa).

The residue at position 27 (T27) is a Phosphothreonine. 2 disordered regions span residues 381 to 401 (LSRK…ASLP) and 422 to 448 (KSLQ…EDPH). Phosphoserine is present on residues S392 and S394. The segment covering 429–444 (DTQEEDEEEEDLDADT) has biased composition (acidic residues). Positions 581-602 (LEWNMANLLFKKEKLKQENSTL) are leucine-zipper.

It belongs to the RNA polymerase beta chain family. As to quaternary structure, component of the RNA polymerase III (Pol III) complex consisting of 17 subunits.

Its subcellular location is the cytoplasm. It is found in the nucleus. Its function is as follows. DNA-dependent RNA polymerase catalyzes the transcription of DNA into RNA using the four ribonucleoside triphosphates as substrates. Specific core component of RNA polymerase III which synthesizes small RNAs, such as 5S rRNA and tRNAs. The protein is DNA-directed RNA polymerase III subunit RPC3 (RPC82) of Saccharomyces cerevisiae (strain YJM789) (Baker's yeast).